Consider the following 876-residue polypeptide: Alanine--tRNA ligase (876 aa).

4 residues coordinate Zn(2+): His-562, His-566, Cys-666, and His-670.

This sequence belongs to the class-II aminoacyl-tRNA synthetase family. It depends on Zn(2+) as a cofactor.

It localises to the cytoplasm. The enzyme catalyses tRNA(Ala) + L-alanine + ATP = L-alanyl-tRNA(Ala) + AMP + diphosphate. Catalyzes the attachment of alanine to tRNA(Ala) in a two-step reaction: alanine is first activated by ATP to form Ala-AMP and then transferred to the acceptor end of tRNA(Ala). Also edits incorrectly charged Ser-tRNA(Ala) and Gly-tRNA(Ala) via its editing domain. The sequence is that of Alanine--tRNA ligase from Hahella chejuensis (strain KCTC 2396).